Consider the following 218-residue polypeptide: Flagellar calcium-binding protein TB-24 (218 aa).

The disordered stretch occupies residues 1–27; it reads MGCSASKDTTNSKDGAASKGGKDGKTT. EF-hand domains lie at 48–83, 84–119, 130–165, and 167–202; these read ESKS…ILKL, DEFT…LVEF, YDIF…LKEW, and VDIT…KKLQ. Residues Asp61, Asn63, Thr65, Lys67, and Glu72 each coordinate Ca(2+). Residues Asp143, Asp145, Ser147, Glu154, Asp180, Asn182, Ser184, and Glu191 each contribute to the Ca(2+) site.

Belongs to the calflagin family.

The protein localises to the cell projection. It localises to the cilium. Its subcellular location is the flagellum. Functionally, may contribute to the rapid motility of the trypanosomes, playing a role either in flagellar structure or in calcium metabolism. Could alternate between a GDP-bound inactive form to a calcium/GTP-bound active form. The polypeptide is Flagellar calcium-binding protein TB-24 (Trypanosoma brucei brucei).